A 372-amino-acid polypeptide reads, in one-letter code: 4-hydroxy-3-methylbut-2-en-1-yl diphosphate synthase (flavodoxin) (372 aa).

[4Fe-4S] cluster contacts are provided by C270, C273, C305, and E312.

Belongs to the IspG family. Requires [4Fe-4S] cluster as cofactor.

The catalysed reaction is (2E)-4-hydroxy-3-methylbut-2-enyl diphosphate + oxidized [flavodoxin] + H2O + 2 H(+) = 2-C-methyl-D-erythritol 2,4-cyclic diphosphate + reduced [flavodoxin]. It functions in the pathway isoprenoid biosynthesis; isopentenyl diphosphate biosynthesis via DXP pathway; isopentenyl diphosphate from 1-deoxy-D-xylulose 5-phosphate: step 5/6. Functionally, converts 2C-methyl-D-erythritol 2,4-cyclodiphosphate (ME-2,4cPP) into 1-hydroxy-2-methyl-2-(E)-butenyl 4-diphosphate. The chain is 4-hydroxy-3-methylbut-2-en-1-yl diphosphate synthase (flavodoxin) from Alteromonas mediterranea (strain DSM 17117 / CIP 110805 / LMG 28347 / Deep ecotype).